A 205-amino-acid polypeptide reads, in one-letter code: Outer-membrane lipoprotein LolB (205 aa).

The first 17 residues, 1–17 (MFLRHCITFTMIALLAG), serve as a signal peptide directing secretion. A lipid anchor (N-palmitoyl cysteine) is attached at C18. C18 carries the S-diacylglycerol cysteine lipid modification.

Belongs to the LolB family. Monomer.

It localises to the cell outer membrane. Functionally, plays a critical role in the incorporation of lipoproteins in the outer membrane after they are released by the LolA protein. The polypeptide is Outer-membrane lipoprotein LolB (Pseudomonas putida (strain ATCC 700007 / DSM 6899 / JCM 31910 / BCRC 17059 / LMG 24140 / F1)).